A 213-amino-acid polypeptide reads, in one-letter code: Octanoyltransferase (213 aa).

One can recognise a BPL/LPL catalytic domain in the interval 28 to 203; that stretch reads GTSPETLLLL…RFPFLLDERL (176 aa). Residues 66–73, 133–135, and 146–148 contribute to the substrate site; these read RGGDVTFH, SIG, and GFA. Catalysis depends on Cys-164, which acts as the Acyl-thioester intermediate.

Belongs to the LipB family.

It is found in the cytoplasm. It catalyses the reaction octanoyl-[ACP] + L-lysyl-[protein] = N(6)-octanoyl-L-lysyl-[protein] + holo-[ACP] + H(+). Its pathway is protein modification; protein lipoylation via endogenous pathway; protein N(6)-(lipoyl)lysine from octanoyl-[acyl-carrier-protein]: step 1/2. In terms of biological role, catalyzes the transfer of endogenously produced octanoic acid from octanoyl-acyl-carrier-protein onto the lipoyl domains of lipoate-dependent enzymes. Lipoyl-ACP can also act as a substrate although octanoyl-ACP is likely to be the physiological substrate. This is Octanoyltransferase from Geobacter metallireducens (strain ATCC 53774 / DSM 7210 / GS-15).